Consider the following 234-residue polypeptide: Ribosomal RNA small subunit methyltransferase G (234 aa).

Residues glycine 74, phenylalanine 79, 125-126 (AE), and arginine 144 contribute to the S-adenosyl-L-methionine site.

It belongs to the methyltransferase superfamily. RNA methyltransferase RsmG family.

Its subcellular location is the cytoplasm. In terms of biological role, specifically methylates the N7 position of a guanine in 16S rRNA. This is Ribosomal RNA small subunit methyltransferase G from Roseiflexus castenholzii (strain DSM 13941 / HLO8).